Consider the following 725-residue polypeptide: Peroxisomal fatty acid beta-oxidation multifunctional protein MFP2 (725 aa).

Catalysis depends on Glu119, which acts as the Nucleophile. Residue Glu139 is the Proton acceptor of the active site. Positions 723–725 match the Microbody targeting signal motif; the sequence is SRL.

The protein in the N-terminal section; belongs to the enoyl-CoA hydratase/isomerase family. This sequence in the central section; belongs to the 3-hydroxyacyl-CoA dehydrogenase family. Highly expressed in senescing leaves and at lower levels in flowers and siliques.

It is found in the glyoxysome. Its subcellular location is the peroxisome. The catalysed reaction is a (3S)-3-hydroxyacyl-CoA = a (2E)-enoyl-CoA + H2O. It catalyses the reaction a 4-saturated-(3S)-3-hydroxyacyl-CoA = a (3E)-enoyl-CoA + H2O. The enzyme catalyses (3S)-3-hydroxybutanoyl-CoA = (2E)-butenoyl-CoA + H2O. It carries out the reaction (3S)-hydroxyoctanoyl-CoA = (2E)-octenoyl-CoA + H2O. The catalysed reaction is (3S)-3-hydroxydodecanoyl-CoA = (2E)-dodecenoyl-CoA + H2O. It catalyses the reaction (3S)-hydroxytetradecanoyl-CoA = (2E)-tetradecenoyl-CoA + H2O. The enzyme catalyses (3S)-hydroxyhexanoyl-CoA = (2E)-hexenoyl-CoA + H2O. It carries out the reaction a (3Z)-enoyl-CoA = a 4-saturated (2E)-enoyl-CoA. The catalysed reaction is a (3E)-enoyl-CoA = a 4-saturated (2E)-enoyl-CoA. It catalyses the reaction (3S)-3-hydroxybutanoyl-CoA = (3R)-3-hydroxybutanoyl-CoA. The enzyme catalyses a (3S)-3-hydroxyacyl-CoA + NAD(+) = a 3-oxoacyl-CoA + NADH + H(+). It carries out the reaction (3S)-3-hydroxybutanoyl-CoA + NAD(+) = acetoacetyl-CoA + NADH + H(+). The catalysed reaction is (3S)-hydroxyhexanoyl-CoA + NAD(+) = 3-oxohexanoyl-CoA + NADH + H(+). It catalyses the reaction (3S)-hydroxyoctanoyl-CoA + NAD(+) = 3-oxooctanoyl-CoA + NADH + H(+). The enzyme catalyses (3S)-3-hydroxydodecanoyl-CoA + NAD(+) = 3-oxododecanoyl-CoA + NADH + H(+). It carries out the reaction (3S)-hydroxytetradecanoyl-CoA + NAD(+) = 3-oxotetradecanoyl-CoA + NADH + H(+). It functions in the pathway lipid metabolism; fatty acid beta-oxidation. Involved in peroxisomal fatty acid beta-oxidation during seed germination. Possesses enoyl-CoA hydratase activity against long chain substrates (C14-C18) and 3-hydroxyacyl-CoA dehydrogenase activity against chains of variable sizes (C6-C18). Possesses 3-hydroxy-3-phenylpropionyl-CoA dehydrogenase activity and is involved in the peroxisomal beta-oxidation pathway for the biosynthesis of benzoic acid (BA). Required for the accumulation in seeds of substituted hydroxybenzoylated choline esters, which are BA-containing secondary metabolites. Fatty acid beta-oxidation pathway in peroxisomes regulates gene silencing, histone acetylation and DNA methylation. The sequence is that of Peroxisomal fatty acid beta-oxidation multifunctional protein MFP2 from Arabidopsis thaliana (Mouse-ear cress).